Reading from the N-terminus, the 192-residue chain is MAAIRKKLVIVGDGACGKTCLLIVFSKDQFPDVYVPTVFENYVADIEVDGKQVELALWDTAGQEDYDRLRPLSYPDTDVILMCFSIDSPDSLENIPEKWTPEVRHFCPNVPIILVGNKRDLRSDPQTVRELAKMKQEPVKPEQGRAIAEQIGAFAYLECSAKTKDGIREVFEKATQAALQQKKKKKSKCMIL.

A GTP-binding site is contributed by 12–19 (GDGACGKT). Residues 34–42 (YVPTVFENY) carry the Effector region motif. Residues 59–63 (DTAGQ) and 117–120 (NKRD) contribute to the GTP site. Cys189 is subject to Cysteine methyl ester. Cys189 carries S-geranylgeranyl cysteine lipidation. A propeptide spans 190-192 (MIL) (removed in mature form).

This sequence belongs to the small GTPase superfamily. Rho family. As to quaternary structure, may interact with unc-89 (via DN and PH domains). Interacts with bli-3 and memo-1. As to expression, in larvae and adults, enriched at the tip of the head where the anterior sensory organ is located and in the pharyngeal nerve ring (at protein level). In embryos, enriched at the boundaries of dorsal cells undergoing intercalation, ventral enclosure and elongation.

Its subcellular location is the cell membrane. The protein localises to the cytoplasm. The protein resides in the cytoskeleton. It localises to the cell cortex. GTP hydrolysis is stimulated by unc-89. Its function is as follows. Required for ventral migration of epidermal cells during ventral enclosure in the embryo and for cell elongation. Also required for ventral migration of P cells during larval development. Involved in asymmetric spindle positioning during anaphase and establishment of cell polarity during embryo development. In adults, involved in regulation of multiple processes including locomotion, pharyngeal pumping, fecundity, ovulation, defecation and body morphology. In body wall muscles, regulates organization of myosin thick filaments downstream of unc-89. Association with the oxidase bli-3 promotes ROS production and this interaction may be modulated by memo-1, in order to control the oxidative stress response and longevity. The protein is Ras-like GTP-binding protein rhoA of Caenorhabditis elegans.